The chain runs to 593 residues: Methylenetetrahydrofolate reductase (NADH) 1 (593 aa).

Catalysis depends on glutamate 21, which acts as the Proton donor/acceptor. NAD(+) is bound by residues 21–26 (EYFPPK) and 52–53 (TW). FAD is bound by residues 52 to 53 (TW), histidine 81, 111 to 113 (RGD), tyrosine 153, 157 to 160 (HPDA), aspartate 175, and lysine 182. Aspartate 113 contacts substrate. Positions 193 and 285 each coordinate substrate.

This sequence belongs to the methylenetetrahydrofolate reductase family. In terms of assembly, homodimer. FAD is required as a cofactor.

The catalysed reaction is (6S)-5-methyl-5,6,7,8-tetrahydrofolate + NAD(+) = (6R)-5,10-methylene-5,6,7,8-tetrahydrofolate + NADH + H(+). The protein operates within one-carbon metabolism; tetrahydrofolate interconversion. With respect to regulation, plant MTHFRs strongly prefer NADH over NADPH. Not inhibited by methionine or S-adenosylmethionine. Functionally, the probable reversibility of the MTHFR reaction in plants suggests that they can metabolize the methyl group of 5,10-methylenetetrahydrofolate to serine, sugars and starch. This Zea mays (Maize) protein is Methylenetetrahydrofolate reductase (NADH) 1.